A 552-amino-acid polypeptide reads, in one-letter code: Dihydroxy-acid dehydratase (552 aa).

Aspartate 78 provides a ligand contact to Mg(2+). Cysteine 119 contacts [2Fe-2S] cluster. 2 residues coordinate Mg(2+): aspartate 120 and lysine 121. At lysine 121 the chain carries N6-carboxylysine. Cysteine 191 contributes to the [2Fe-2S] cluster binding site. Glutamate 442 is a Mg(2+) binding site. The active-site Proton acceptor is serine 468.

This sequence belongs to the IlvD/Edd family. In terms of assembly, homodimer. It depends on [2Fe-2S] cluster as a cofactor. Mg(2+) serves as cofactor.

The catalysed reaction is (2R)-2,3-dihydroxy-3-methylbutanoate = 3-methyl-2-oxobutanoate + H2O. The enzyme catalyses (2R,3R)-2,3-dihydroxy-3-methylpentanoate = (S)-3-methyl-2-oxopentanoate + H2O. It functions in the pathway amino-acid biosynthesis; L-isoleucine biosynthesis; L-isoleucine from 2-oxobutanoate: step 3/4. Its pathway is amino-acid biosynthesis; L-valine biosynthesis; L-valine from pyruvate: step 3/4. In terms of biological role, functions in the biosynthesis of branched-chain amino acids. Catalyzes the dehydration of (2R,3R)-2,3-dihydroxy-3-methylpentanoate (2,3-dihydroxy-3-methylvalerate) into 2-oxo-3-methylpentanoate (2-oxo-3-methylvalerate) and of (2R)-2,3-dihydroxy-3-methylbutanoate (2,3-dihydroxyisovalerate) into 2-oxo-3-methylbutanoate (2-oxoisovalerate), the penultimate precursor to L-isoleucine and L-valine, respectively. This is Dihydroxy-acid dehydratase from Ruminiclostridium cellulolyticum (strain ATCC 35319 / DSM 5812 / JCM 6584 / H10) (Clostridium cellulolyticum).